Consider the following 899-residue polypeptide: Solute carrier family 12 member 9 (899 aa).

Topologically, residues 1 to 42 (MANEHSPLLVHGVYSMMGNAEDSRGGSAGTGEASNPKTDPRK) are cytoplasmic. A helical membrane pass occupies residues 43–63 (LNTFFGVMVPTILSMFSIVLF). Residues 64 to 78 (LRTGFVVGHAGLLHG) are Extracellular-facing. The chain crosses the membrane as a helical span at residues 79-99 (LLMLFVAYFIISLTILSICAI). At 100 to 125 (STNGAVEGGGAYFMISRSLGPEFGGS) the chain is on the cytoplasmic side. A helical transmembrane segment spans residues 126–146 (IGLMFYLAKVCACGVYVLGLV). Residues 147-175 (EAIMDVFGQDPGSSVAQGLRVLPQGYWYT) lie on the Extracellular side of the membrane. Residues 176-196 (VLYSSVVLLLCMLVCLVGAHI) form a helical membrane-spanning segment. Over 197–201 (YAKAS) the chain is Cytoplasmic. A helical transmembrane segment spans residues 202–222 (FLILLVVTVSLISIIISPLIV). Topologically, residues 223–269 (SPQGFNITHTYGNNHSVTVSPSYTGFNSTTLKNNLGPRYSLDYSTNT) are extracellular. N-linked (GlcNAc...) asparagine glycosylation is found at Asn-228, Asn-236, and Asn-249. A helical transmembrane segment spans residues 270-290 (MMSFATVFAVMFTSCTGIMAG). The Cytoplasmic segment spans residues 291 to 306 (ANMSGELKNPSESIPK). Residues 307–327 (GTIMAVAYTFTVYVLLYLLLS) form a helical membrane-spanning segment. At 328 to 350 (STCDRSLLLNDYAVFQRVNVWPP) the chain is on the extracellular side. Residues 351 to 371 (FVTIGVYCASLSAAMCSMIGA) form a helical membrane-spanning segment. The Cytoplasmic portion of the chain corresponds to 372 to 373 (SR). The chain crosses the membrane as a helical span at residues 374–394 (ILHALALDQLFGLPLAPAAVT). The Extracellular portion of the chain corresponds to 395–399 (SSSGN). Residues 400-420 (PWVSVLYTWALVQCTLFAGQL) form a helical membrane-spanning segment. Position 421 (Asn-421) is a topological domain, cytoplasmic. A helical membrane pass occupies residues 422-442 (VIAGIVTVFYLLAYAAVDLAC). Topologically, residues 443-455 (LALEWASAPNFRP) are extracellular. Residues 456 to 476 (TFQFFSWHTCLLGIISCVVMM) traverse the membrane as a helical segment. At 477–487 (FVINPVYSSAS) the chain is on the extracellular side. The helical transmembrane segment at 488 to 510 (IVLLLLLLLFLHYRSPTSSWGYI) threads the bilayer. Topologically, residues 511–563 (SQALIFHQVRKYLLMLDSRKDHVKFWRPQVLLMVSNPRSSCQLICFVNQLKKG) are cytoplasmic. Residues 564–584 (GLFVLGHVQIGDLDVLPADPV) form a helical membrane-spanning segment. Residues 585–749 (QPQYNFWLSL…NLLTPGSASY (165 aa)) are Extracellular-facing. Residues 750–770 (ADVGSLFLLQMACVLNMASGW) traverse the membrane as a helical segment. Residues 771–899 (RRARLRIFVC…GVTPVTCTEL (129 aa)) are Cytoplasmic-facing.

This sequence belongs to the SLC12A transporter family.

It localises to the cell membrane. Its subcellular location is the lysosome membrane. Its function is as follows. Seems to correspond to a subunit of a multimeric transport system and thus, additional subunits may be required for its function. May play a role in lysosomal ion flux and osmoregulation. This is Solute carrier family 12 member 9 (slc12a9) from Danio rerio (Zebrafish).